The sequence spans 140 residues: Sex-regulated protein janus-B (140 aa).

R42 contacts substrate. The active-site Proton acceptor is the H69. A substrate-binding site is contributed by 110–112; that stretch reads SRT.

This sequence belongs to the janus family.

JanA and janB regulate somatic sex differentiation. This chain is Sex-regulated protein janus-B (janB), found in Drosophila teissieri (Fruit fly).